Consider the following 736-residue polypeptide: 3',5'-cyclic-AMP phosphodiesterase 4B (736 aa).

Disordered stretches follow at residues 51 to 78 (QLPPLSQRQSERARTPEGDGISRPTTLP), 189 to 209 (LHGTSNKRSPAASQPPVSRVN), and 282 to 301 (KQNDVEIPSPTQKDREKKKK). Phosphoserine is present on serine 290. The 330-residue stretch at 330–659 (VNTENEDHLA…NWYQSMIPQS (330 aa)) folds into the PDEase domain. Histidine 406 serves as the catalytic Proton donor. Histidine 406 is a 3',5'-cyclic AMP binding site. Residues histidine 406 and histidine 410 each coordinate AMP. Residues histidine 410, histidine 446, aspartate 447, and aspartate 564 each coordinate Zn(2+). AMP is bound by residues aspartate 447, aspartate 564, glutamine 615, and phenylalanine 618. Aspartate 447 provides a ligand contact to Mg(2+). Position 447 (aspartate 447) interacts with Mn(2+). 2 residues coordinate 3',5'-cyclic AMP: glutamine 615 and phenylalanine 618. A phosphoserine mark is found at serine 659 and serine 661. The interval 685–736 (DEEDSEGPEKEGEGHSYFSSTKTLCVIDPENRDSLGETDIDIATEDKSPVDT) is disordered.

It belongs to the cyclic nucleotide phosphodiesterase family. PDE4 subfamily. As to quaternary structure, interacts with DISC1. Zn(2+) is required as a cofactor. It depends on Mg(2+) as a cofactor. The cofactor is Mn(2+). As to expression, expressed in brain, heart, lung and skeletal muscle. Expressed in white blood cells. Brain-specific isoform.

It localises to the cytoplasm. It is found in the cell membrane. The catalysed reaction is 3',5'-cyclic AMP + H2O = AMP + H(+). Its pathway is purine metabolism; 3',5'-cyclic AMP degradation; AMP from 3',5'-cyclic AMP: step 1/1. With respect to regulation, inhibited by rolipram. In terms of biological role, hydrolyzes the second messenger cAMP, which is a key regulator of many important physiological processes. May be involved in mediating central nervous system effects of therapeutic agents ranging from antidepressants to antiasthmatic and anti-inflammatory agents. This chain is 3',5'-cyclic-AMP phosphodiesterase 4B, found in Homo sapiens (Human).